The chain runs to 290 residues: 33 kDa chaperonin (290 aa).

2 disulfide bridges follow: Cys231–Cys233 and Cys263–Cys266.

It belongs to the HSP33 family. Post-translationally, under oxidizing conditions two disulfide bonds are formed involving the reactive cysteines. Under reducing conditions zinc is bound to the reactive cysteines and the protein is inactive.

The protein resides in the cytoplasm. In terms of biological role, redox regulated molecular chaperone. Protects both thermally unfolding and oxidatively damaged proteins from irreversible aggregation. Plays an important role in the bacterial defense system toward oxidative stress. In Thermotoga sp. (strain RQ2), this protein is 33 kDa chaperonin.